Reading from the N-terminus, the 88-residue chain is Small ribosomal subunit protein uS17 (88 aa).

It belongs to the universal ribosomal protein uS17 family. As to quaternary structure, part of the 30S ribosomal subunit.

In terms of biological role, one of the primary rRNA binding proteins, it binds specifically to the 5'-end of 16S ribosomal RNA. The sequence is that of Small ribosomal subunit protein uS17 from Prochlorococcus marinus (strain MIT 9301).